The chain runs to 188 residues: Threonylcarbamoyl-AMP synthase (188 aa).

The YrdC-like domain maps to 3–188 (QLHPSDIKDV…RSGKILRNGQ (186 aa)).

This sequence belongs to the SUA5 family. TsaC subfamily.

The protein resides in the cytoplasm. The enzyme catalyses L-threonine + hydrogencarbonate + ATP = L-threonylcarbamoyladenylate + diphosphate + H2O. Its function is as follows. Required for the formation of a threonylcarbamoyl group on adenosine at position 37 (t(6)A37) in tRNAs that read codons beginning with adenine. Catalyzes the conversion of L-threonine, HCO(3)(-)/CO(2) and ATP to give threonylcarbamoyl-AMP (TC-AMP) as the acyladenylate intermediate, with the release of diphosphate. The polypeptide is Threonylcarbamoyl-AMP synthase (Shewanella oneidensis (strain ATCC 700550 / JCM 31522 / CIP 106686 / LMG 19005 / NCIMB 14063 / MR-1)).